The chain runs to 183 residues: Transmembrane and coiled-coil domain-containing protein 2 (183 aa).

A helical transmembrane segment spans residues Val54–Trp74. A coiled-coil region spans residues Gly127 to Ile150.

It localises to the membrane. The protein is Transmembrane and coiled-coil domain-containing protein 2 (Tmco2) of Mus musculus (Mouse).